The following is a 2672-amino-acid chain: eIF-2-alpha kinase activator GCN1 (2672 aa).

HEAT repeat units follow at residues 5-42 (LNWE…QETL), 79-117 (NLEP…WINS), 174-211 (CIFQ…YSKL), 227-267 (QAAL…NPPS), 329-366 (FASS…KISN), 372-410 (EDLT…THYE), 509-549 (HGHA…NSSI), 611-648 (KYVT…IFNI), 706-745 (IQPN…EEGV), 902-932 (QDYL…IDSI), and 933-970 (SLTY…EEDE). One copy of the HEAT 12; degenerate repeat lies at 975–994 (LLLAMEIISVHAEAFEDPSI). Residues 995–1030 (PRISIVEVLLSLLSLPSKAKIAKDCFNALCQSISVA) form an HEAT 13; degenerate repeat. HEAT repeat units lie at residues 1031 to 1067 (PNQE…LEPF), 1099 to 1138 (VVND…FTSE), 1185 to 1224 (STVA…REPI), 1243 to 1281 (QNSK…HLQQ), 1284 to 1321 (ARIH…QFKQ), 1363 to 1401 (LSEF…SLGK), 1405 to 1442 (PYVI…HTTG), 1444 to 1480 (GVKK…LDPT), 1484 to 1521 (ASLS…VIRN), 1523 to 1559 (EIQK…HYID), 1561 to 1598 (PSLA…LVDT), 1603 to 1640 (PYLQ…RLGE), 1641 to 1679 (EQFP…GLGL), 1681 to 1717 (KLDE…CFGS), 1721 to 1758 (PYIN…NYAT), 1760 to 1796 (AVDL…QVTG), 1825 to 1862 (DRRD…NTPR), 1863 to 1903 (AVKE…RVGG), 1905 to 1942 (ALSQ…SAST), 1947 to 1984 (QFQS…VVGK), 1985 to 2024 (TAVD…VIFP), 2026 to 2055 (LIPT…SALY), 2057 to 2095 (RLSI…SVND), 2097 to 2134 (EGLH…KTVL), 2138 to 2175 (VYIP…KVDK), 2206 to 2243 (RGPN…KTPA), 2250 to 2286 (VSVI…KIPM), 2290 to 2328 (PFIP…HQPR), 2347 to 2384 (GVKT…EEML), 2392 to 2429 (VAYA…ETGK), 2450 to 2487 (GLID…LEGE), and 2506 to 2546 (ENIN…FKFD). The interval 1330 to 1641 (LMEKLLNPTV…GALVERLGEE (312 aa)) is EF3-like region. The tract at residues 2207 to 2356 (GPNCVLPIFL…GVKTAMLKAL (150 aa)) is RWDBD region.

This sequence belongs to the GCN1 family. Interacts (via N- and C-terminus) with GCN2 (via N-terminal RWD domain); this interaction stimulates GCN2 kinase activity in a GCN20-dependent manner in response to amino acid starvation. Interacts (via C-terminus) with GCN20 (via N-terminus); this interaction stimulates GCN2 kinase activity in response to amino acid starvation. The GCN1-GCN20 complex interacts with GCN2 on translating ribosomes in amino acid-starved cells; GCN1 may bind near the ribosomal A-site and promotes the transfer of uncharged tRNAs from the A-site to the tRNA-binding domain in GCN2 for its subsequent kinase activation, and hence allowing GCN4 translational activation and derepression of amino acid biosynthetic genes. Interacts (via C-terminus) with YIH1 (via N-terminus); this interaction reduces the GCN1-GCN20 complex formation and prevents the interaction of GCN1 with GCN2 and GCN2 kinase activation in amino acid-starved cells. Interacts with GIR2; this interaction prevents the interaction of GCN1 with GCN2 and GCN2 kinase activation in amino acid-starved cells. Interacts (via middle region) with RPS10A and RPS10B; these interactions are direct and promote GCN2 kinase activation. Associates (via N-terminus) with ribosomes; this association is stimulated in a ATP- and GCN20-dependent manner and is necessary to activate GCN2 kinase activity.

Its subcellular location is the cytoplasm. Its function is as follows. Ribosome collision sensor that activates a translation quality control pathway when a ribosome has stalled during translation. Directly binds to the ribosome and acts as a sentinel for colliding ribosomes. GCN1 also acts as a positive activator of the integrated stress response (ISR) by mediating activation of GCN2 in response to low amino acid, carbon, or purine availability. Component of the GCN1-GCN20 complex that forms a complex with GCN2 on translating ribosomes: during this process, GCN1 acts as a chaperone to facilitate delivery of uncharged tRNAs that enter the A-site of ribosomes to the tRNA-binding domain of GCN2, and hence stimulating GCN2 kinase activity, leading to phosphorylation of eukaryotic translation initiation factor 2 (eIF-2-alpha/SUI2). eIF-2-alpha/SUI2 phosphorylation converts eIF-2-alpha/SUI2 into a global protein synthesis inhibitor, leading to a global attenuation of cap-dependent translation, and thus to a reduced overall utilization of amino acids, while concomitantly initiating the preferential translation of ISR-specific mRNAs, such as the transcriptional activator GCN4, and hence allowing GCN4-mediated reprogramming of amino acid biosynthetic gene expression to alleviate nutrient depletion. This Saccharomyces cerevisiae (strain ATCC 204508 / S288c) (Baker's yeast) protein is eIF-2-alpha kinase activator GCN1.